Here is a 385-residue protein sequence, read N- to C-terminus: 1-deoxy-D-xylulose 5-phosphate reductoisomerase (385 aa).

NADPH contacts are provided by Thr-10, Gly-11, Ser-12, Ile-13, Lys-37, and Asn-124. Lys-125 provides a ligand contact to 1-deoxy-D-xylulose 5-phosphate. Glu-126 is a binding site for NADPH. Residue Asp-150 participates in Mn(2+) binding. 1-deoxy-D-xylulose 5-phosphate-binding residues include Ser-151, Glu-152, Ser-176, and His-199. Residue Glu-152 coordinates Mn(2+). Gly-205 serves as a coordination point for NADPH. Residues Ser-212, Asn-217, Lys-218, and Glu-221 each coordinate 1-deoxy-D-xylulose 5-phosphate. Glu-221 provides a ligand contact to Mn(2+).

This sequence belongs to the DXR family. The cofactor is Mg(2+). It depends on Mn(2+) as a cofactor.

The enzyme catalyses 2-C-methyl-D-erythritol 4-phosphate + NADP(+) = 1-deoxy-D-xylulose 5-phosphate + NADPH + H(+). It functions in the pathway isoprenoid biosynthesis; isopentenyl diphosphate biosynthesis via DXP pathway; isopentenyl diphosphate from 1-deoxy-D-xylulose 5-phosphate: step 1/6. Functionally, catalyzes the NADPH-dependent rearrangement and reduction of 1-deoxy-D-xylulose-5-phosphate (DXP) to 2-C-methyl-D-erythritol 4-phosphate (MEP). The chain is 1-deoxy-D-xylulose 5-phosphate reductoisomerase from Clostridium botulinum (strain Langeland / NCTC 10281 / Type F).